The sequence spans 170 residues: ATP synthase subunit b (170 aa).

A helical transmembrane segment spans residues 4 to 24 (ILLLGLALAPVALFASQGAVE).

Belongs to the ATPase B chain family. In terms of assembly, F-type ATPases have 2 components, F(1) - the catalytic core - and F(0) - the membrane proton channel. F(1) has five subunits: alpha(3), beta(3), gamma(1), delta(1), epsilon(1). F(0) has three main subunits: a(1), b(2) and c(10-14). The alpha and beta chains form an alternating ring which encloses part of the gamma chain. F(1) is attached to F(0) by a central stalk formed by the gamma and epsilon chains, while a peripheral stalk is formed by the delta and b chains.

It is found in the cell inner membrane. F(1)F(0) ATP synthase produces ATP from ADP in the presence of a proton or sodium gradient. F-type ATPases consist of two structural domains, F(1) containing the extramembraneous catalytic core and F(0) containing the membrane proton channel, linked together by a central stalk and a peripheral stalk. During catalysis, ATP synthesis in the catalytic domain of F(1) is coupled via a rotary mechanism of the central stalk subunits to proton translocation. Its function is as follows. Component of the F(0) channel, it forms part of the peripheral stalk, linking F(1) to F(0). This is ATP synthase subunit b from Aliarcobacter butzleri (strain RM4018) (Arcobacter butzleri).